The primary structure comprises 89 residues: MALTSEQKKSILSEFGLHETDTGSPEAQIALLTNRINNLTEHLKFHKHDHHSRRGLLLLVGRRRGLLKYLADNNVDRYRDLIARLGLRR.

The protein belongs to the universal ribosomal protein uS15 family. As to quaternary structure, part of the 30S ribosomal subunit. Forms a bridge to the 50S subunit in the 70S ribosome, contacting the 23S rRNA.

In terms of biological role, one of the primary rRNA binding proteins, it binds directly to 16S rRNA where it helps nucleate assembly of the platform of the 30S subunit by binding and bridging several RNA helices of the 16S rRNA. Forms an intersubunit bridge (bridge B4) with the 23S rRNA of the 50S subunit in the ribosome. This Corynebacterium glutamicum (strain R) protein is Small ribosomal subunit protein uS15.